The chain runs to 436 residues: Gamma-glutamyl phosphate reductase (436 aa).

It belongs to the gamma-glutamyl phosphate reductase family.

The protein resides in the cytoplasm. It carries out the reaction L-glutamate 5-semialdehyde + phosphate + NADP(+) = L-glutamyl 5-phosphate + NADPH + H(+). Its pathway is amino-acid biosynthesis; L-proline biosynthesis; L-glutamate 5-semialdehyde from L-glutamate: step 2/2. Functionally, catalyzes the NADPH-dependent reduction of L-glutamate 5-phosphate into L-glutamate 5-semialdehyde and phosphate. The product spontaneously undergoes cyclization to form 1-pyrroline-5-carboxylate. This is Gamma-glutamyl phosphate reductase from Prochlorococcus marinus (strain MIT 9515).